Reading from the N-terminus, the 363-residue chain is Chorismate synthase (363 aa).

R48 contributes to the NADP(+) binding site. Residues 125–127 (RSS), 238–239 (NA), G278, 293–297 (KPTAS), and R319 each bind FMN.

The protein belongs to the chorismate synthase family. As to quaternary structure, homotetramer. Requires FMNH2 as cofactor.

It catalyses the reaction 5-O-(1-carboxyvinyl)-3-phosphoshikimate = chorismate + phosphate. The protein operates within metabolic intermediate biosynthesis; chorismate biosynthesis; chorismate from D-erythrose 4-phosphate and phosphoenolpyruvate: step 7/7. Functionally, catalyzes the anti-1,4-elimination of the C-3 phosphate and the C-6 proR hydrogen from 5-enolpyruvylshikimate-3-phosphate (EPSP) to yield chorismate, which is the branch point compound that serves as the starting substrate for the three terminal pathways of aromatic amino acid biosynthesis. This reaction introduces a second double bond into the aromatic ring system. The chain is Chorismate synthase from Acinetobacter baumannii (strain ACICU).